A 68-amino-acid polypeptide reads, in one-letter code: Purkinje cell protein 4-like protein 1 (68 aa).

Positions 1–16 are enriched in polar residues; that stretch reads MSELNTKTSPATNQAA. The tract at residues 1-45 is disordered; the sequence is MSELNTKTSPATNQAAGQEEKGKAGNVKKAEEEEEIDIDLTAPET. Thr8 is modified (phosphothreonine). The span at 18–31 shows a compositional bias: basic and acidic residues; the sequence is QEEKGKAGNVKKAE. The IQ domain maps to 45–68; it reads TEKAALAIQGKFRRFQKRKKDPSS.

Belongs to the PCP4 family.

In Homo sapiens (Human), this protein is Purkinje cell protein 4-like protein 1 (PCP4L1).